Consider the following 158-residue polypeptide: Probable transcription regulator ArfM (158 aa).

Functionally, activates, in anaerobic conditions, the transcription of the fermentative operons lctEP and alsDS, of the hmp gene encoding a flavohemoglobin-like protein, the nitrite reductase operon nasDE and the heme biosynthesis genes hemN and hemZ. This chain is Probable transcription regulator ArfM (arfM), found in Bacillus subtilis (strain 168).